The chain runs to 46 residues: GVPCLCDSDGPSVRGNTLSGILWLAGCPSGWHNCKKHKPTIGWCCK.

3 cysteine pairs are disulfide-bonded: cysteine 4–cysteine 44, cysteine 6–cysteine 34, and cysteine 27–cysteine 45.

This sequence belongs to the sea anemone sodium channel inhibitory toxin family. Type I subfamily.

The protein resides in the secreted. It localises to the nematocyst. Functionally, binds specifically to voltage-gated sodium channels (Nav), thereby delaying their inactivation during signal transduction. Thus it strongly stimulates mammalian cardiac muscle contraction. The chain is Delta-actitoxin-Avd1d from Anemonia sulcata (Mediterranean snakelocks sea anemone).